A 261-amino-acid chain; its full sequence is MRLPEQPGDGKPENETKGDQETPERGEEPRRSPAPDFPTWEKMPFHHVTAGLLYKGNYLNRSLSAGSDSEQLANISVEELDEIREAFRVLDRDGNGFISKQELGMAMRSLGYMPSEVELAIIMQRLDMDGDGQVDFDEFMTILGPKLVSSEGRDGFLGNTIDSIFWQFDMQRVTLEELKHILYHAFRDHLTMKDIENIIINEEESLNETSGNCQTEFEGVHSQKQNRQTCVRKSLICAFAMAFIISVMLIAANQILRSGME.

Residues 1–41 form a disordered region; it reads MRLPEQPGDGKPENETKGDQETPERGEEPRRSPAPDFPTWE. Topologically, residues 1–234 are cytoplasmic; that stretch reads MRLPEQPGDG…QNRQTCVRKS (234 aa). Positions 8 to 33 are enriched in basic and acidic residues; it reads GDGKPENETKGDQETPERGEEPRRSP. 2 EF-hand domains span residues 78–113 and 114–149; these read EELD…LGYM and PSEV…KLVS. 9 residues coordinate Ca(2+): Asp-91, Asp-93, Asn-95, Glu-102, Asp-127, Asp-129, Asp-131, Gln-133, and Glu-138. The helical; Anchor for type IV membrane protein transmembrane segment at 235–255 threads the bilayer; it reads LICAFAMAFIISVMLIAANQI. Residues 256–261 are Extracellular-facing; sequence LRSGME.

In terms of assembly, interacts with PI4KB. This binding competes with FREQ/NCS1 binding in a calcium-dependent manner. As to expression, brain-specific. High expression in the cerebellum, hippocampus, and cortex.

It localises to the golgi apparatus. It is found in the trans-Golgi network membrane. The protein resides in the cytoplasm. The protein localises to the perinuclear region. Its subcellular location is the cell membrane. Negatively regulates Golgi-to-plasma membrane trafficking by interacting with PI4KB and inhibiting its activity. May play a role in the physiology of neurons and is potentially important in memory and learning. This is Calcium-binding protein 8 (Caln1) from Mus musculus (Mouse).